Reading from the N-terminus, the 163-residue chain is Endoribonuclease YbeY (163 aa).

Residues H116, H120, and H126 each coordinate Zn(2+).

This sequence belongs to the endoribonuclease YbeY family. Zn(2+) serves as cofactor.

It localises to the cytoplasm. Its function is as follows. Single strand-specific metallo-endoribonuclease involved in late-stage 70S ribosome quality control and in maturation of the 3' terminus of the 16S rRNA. This is Endoribonuclease YbeY from Idiomarina loihiensis (strain ATCC BAA-735 / DSM 15497 / L2-TR).